A 797-amino-acid chain; its full sequence is Protocadherin beta-11 (797 aa).

A signal peptide spans 1-26; that stretch reads MENQGTRTQQIRQVLLLFVLLGMSQA. Residues 27 to 690 are Extracellular-facing; it reads GSETWSFSVA…AQADSLTVYL (664 aa). Cadherin domains are found at residues 35–133, 138–242, 247–347, 352–451, and 456–561; these read VAEE…SPIF, MLLE…SPEF, YEVK…APEI, ITSP…APTF, and YTLF…SPFV. N-linked (GlcNAc...) asparagine glycans are attached at residues N418, N436, N487, and N567. The Cadherin 6 domain maps to 568 to 671; sequence GSAPCTELVP…LVDGFSQPYL (104 aa). The helical transmembrane segment at 691 to 711 threads the bilayer; sequence VVALASVSSLFLFSVLLFVAV. Topologically, residues 712–797 are cytoplasmic; sequence RLCRRSRAAS…TFRNSFGFNF (86 aa).

The protein resides in the cell membrane. Potential calcium-dependent cell-adhesion protein. May be involved in the establishment and maintenance of specific neuronal connections in the brain. In Homo sapiens (Human), this protein is Protocadherin beta-11 (PCDHB11).